The chain runs to 349 residues: Probable dual-specificity RNA methyltransferase RlmN (349 aa).

The active-site Proton acceptor is the Glu93. The 231-residue stretch at 99–329 folds into the Radical SAM core domain; the sequence is YKHGNTICVS…TTIRREMGSD (231 aa). A disulfide bond links Cys106 and Cys334. Residues Cys113, Cys117, and Cys120 each coordinate [4Fe-4S] cluster. Residues 160-161, Ser192, 215-217, and Asn291 contribute to the S-adenosyl-L-methionine site; these read GE and SLH. Residue Cys334 is the S-methylcysteine intermediate of the active site.

It belongs to the radical SAM superfamily. RlmN family. [4Fe-4S] cluster is required as a cofactor.

The protein localises to the cytoplasm. The catalysed reaction is adenosine(2503) in 23S rRNA + 2 reduced [2Fe-2S]-[ferredoxin] + 2 S-adenosyl-L-methionine = 2-methyladenosine(2503) in 23S rRNA + 5'-deoxyadenosine + L-methionine + 2 oxidized [2Fe-2S]-[ferredoxin] + S-adenosyl-L-homocysteine. The enzyme catalyses adenosine(37) in tRNA + 2 reduced [2Fe-2S]-[ferredoxin] + 2 S-adenosyl-L-methionine = 2-methyladenosine(37) in tRNA + 5'-deoxyadenosine + L-methionine + 2 oxidized [2Fe-2S]-[ferredoxin] + S-adenosyl-L-homocysteine. Functionally, specifically methylates position 2 of adenine 2503 in 23S rRNA and position 2 of adenine 37 in tRNAs. This Clostridium tetani (strain Massachusetts / E88) protein is Probable dual-specificity RNA methyltransferase RlmN.